A 134-amino-acid chain; its full sequence is Small ribosomal subunit protein uS8c (134 aa).

Belongs to the universal ribosomal protein uS8 family. As to quaternary structure, part of the 30S ribosomal subunit.

The protein localises to the plastid. It localises to the chloroplast. One of the primary rRNA binding proteins, it binds directly to 16S rRNA central domain where it helps coordinate assembly of the platform of the 30S subunit. The polypeptide is Small ribosomal subunit protein uS8c (rps8) (Helianthus annuus (Common sunflower)).